The sequence spans 554 residues: Potassium-transporting ATPase potassium-binding subunit (554 aa).

12 helical membrane passes run proline 3–valine 23, proline 60–leucine 80, glycine 131–valine 151, valine 174–isoleucine 194, leucine 252–methionine 272, glycine 279–tryptophan 299, phenylalanine 323–valine 343, glycine 352–valine 372, glycine 375–glycine 395, phenylalanine 412–methionine 432, leucine 481–glycine 501, and leucine 522–alanine 542.

This sequence belongs to the KdpA family. In terms of assembly, the system is composed of three essential subunits: KdpA, KdpB and KdpC.

The protein resides in the cell membrane. Its function is as follows. Part of the high-affinity ATP-driven potassium transport (or Kdp) system, which catalyzes the hydrolysis of ATP coupled with the electrogenic transport of potassium into the cytoplasm. This subunit binds the extracellular potassium ions and delivers the ions to the membrane domain of KdpB through an intramembrane tunnel. In Streptomyces coelicolor (strain ATCC BAA-471 / A3(2) / M145), this protein is Potassium-transporting ATPase potassium-binding subunit.